The primary structure comprises 62 residues: Inner membrane protein p12 (62 aa).

A helical membrane pass occupies residues 16–36; the sequence is LLIVAIVVVIMAIMLYYFWWM.

This sequence belongs to the asfivirus inner membrane protein p12 family. Homomultimer; disulfide-linked. In terms of processing, not glycosylated.

The protein resides in the virion membrane. The chain is Inner membrane protein p12 from African swine fever virus (isolate Pig/Kenya/KEN-50/1950) (ASFV).